Reading from the N-terminus, the 408-residue chain is MKFVDEVSIRVKAGDGGNGCMSFRREKFIENGGPNGGDGGDGGSVYMVADENLNTLVDYRYTRHHEAQRGSNGGSTDCTGKKGEDLFLRVPVGTTVIDASTQEVIGDLVTPGQKLMVAQGGWHGLGNTRFKSSTNRAPRQTTPGKPGDQRDLKMEMKVLADVGLLGLPNAGKSTFIRSVSAAKPKVADYPFTTLVPNLGVVSVDRWKSFVIADIPGLIEGASEGAGLGIRFLKHLARTRVLLHLVDIAPLDESSPADAAEVIVNELTRFSPSLAERERWLVLNKSDMVMDDERDERVQEVIDRLEWEGPVYVISAISKQGTDKLSHDLMRYLEDRADRLANDPAYAEELADLDQRIEDEARAQLQALDDARTLRRTGVKSVHDIGDDDGWDDDFEDDEDGPEIIYVRD.

The Obg domain maps to 1–159 (MKFVDEVSIR…RDLKMEMKVL (159 aa)). The interval 127-150 (NTRFKSSTNRAPRQTTPGKPGDQR) is disordered. Polar residues predominate over residues 129–143 (RFKSSTNRAPRQTTP). Residues 160–333 (ADVGLLGLPN…LSHDLMRYLE (174 aa)) form the OBG-type G domain. GTP contacts are provided by residues 166-173 (GLPNAGKS), 191-195 (FTTLV), 213-216 (DIPG), 283-286 (NKSD), and 314-316 (SAI). Mg(2+) is bound by residues S173 and T193. Residues 382 to 408 (HDIGDDDGWDDDFEDDEDGPEIIYVRD) are disordered. The segment covering 385-401 (GDDDGWDDDFEDDEDGP) has biased composition (acidic residues).

Belongs to the TRAFAC class OBG-HflX-like GTPase superfamily. OBG GTPase family. In terms of assembly, monomer. Mg(2+) serves as cofactor.

The protein resides in the cytoplasm. In terms of biological role, an essential GTPase which binds GTP, GDP and possibly (p)ppGpp with moderate affinity, with high nucleotide exchange rates and a fairly low GTP hydrolysis rate. Plays a role in control of the cell cycle, stress response, ribosome biogenesis and in those bacteria that undergo differentiation, in morphogenesis control. The chain is GTPase Obg from Pseudomonas putida (strain GB-1).